The primary structure comprises 455 residues: Differentiation-associated protein 1 (455 aa).

The N-terminal stretch at 1-21 (MKFKLFLLVFFVFLLPYLSQS) is a signal peptide. The disordered stretch occupies residues 349–434 (IGSSSSSSSS…SDDDLGNPSS (86 aa)). The segment covering 351 to 423 (SSSSSSSSSS…KSNHTSSESS (73 aa)) has biased composition (low complexity). Serine 433 carries the GPI-like-anchor amidated serine lipid modification. A propeptide spans 434 to 455 (SSSILSVSKLIILLISIILYCF) (removed in mature form).

The protein localises to the cell membrane. Functionally, plays a role in differentiation. The chain is Differentiation-associated protein 1 (dia1) from Dictyostelium discoideum (Social amoeba).